The chain runs to 168 residues: Large ribosomal subunit protein uL10 (168 aa).

The protein belongs to the universal ribosomal protein uL10 family. In terms of assembly, part of the ribosomal stalk of the 50S ribosomal subunit. The N-terminus interacts with L11 and the large rRNA to form the base of the stalk. The C-terminus forms an elongated spine to which L12 dimers bind in a sequential fashion forming a multimeric L10(L12)X complex.

Forms part of the ribosomal stalk, playing a central role in the interaction of the ribosome with GTP-bound translation factors. The polypeptide is Large ribosomal subunit protein uL10 (Acidovorax ebreus (strain TPSY) (Diaphorobacter sp. (strain TPSY))).